The sequence spans 258 residues: Phosphoribosylaminoimidazole-succinocarboxamide synthase (258 aa).

This sequence belongs to the SAICAR synthetase family.

The catalysed reaction is 5-amino-1-(5-phospho-D-ribosyl)imidazole-4-carboxylate + L-aspartate + ATP = (2S)-2-[5-amino-1-(5-phospho-beta-D-ribosyl)imidazole-4-carboxamido]succinate + ADP + phosphate + 2 H(+). It participates in purine metabolism; IMP biosynthesis via de novo pathway; 5-amino-1-(5-phospho-D-ribosyl)imidazole-4-carboxamide from 5-amino-1-(5-phospho-D-ribosyl)imidazole-4-carboxylate: step 1/2. The polypeptide is Phosphoribosylaminoimidazole-succinocarboxamide synthase (Sphingopyxis alaskensis (strain DSM 13593 / LMG 18877 / RB2256) (Sphingomonas alaskensis)).